The chain runs to 861 residues: Probable alpha,alpha-trehalose-phosphate synthase [UDP-forming] 10 (861 aa).

At serine 5 the chain carries Phosphoserine. Residue threonine 32 is modified to Phosphothreonine. The tract at residues 59–546 (ERKIIVANFL…ARSFSQDLER (488 aa)) is glycosyltransferase.

In the N-terminal section; belongs to the glycosyltransferase 20 family. It in the C-terminal section; belongs to the trehalose phosphatase family.

The catalysed reaction is D-glucose 6-phosphate + UDP-alpha-D-glucose = alpha,alpha-trehalose 6-phosphate + UDP + H(+). This chain is Probable alpha,alpha-trehalose-phosphate synthase [UDP-forming] 10 (TPS10), found in Arabidopsis thaliana (Mouse-ear cress).